Reading from the N-terminus, the 300-residue chain is MRCLALDIGGTKIAAAIVKNGEIEQRQQIHTPRENVVEGMHQALGKLLADYEGQFDYVAVASTGIINNGILSALNPKNLGGLAEFPLKASIAKHTDKPIGLLNDAQAATYAEYQLQNFEQVSNFVFITVSTGVGGGIVLNQILQTGSRGIAGHIGHTLADPNGAICGCGRRGCVEAIASGRAIEAVSSQWEDPCDPKEVFERFRKNDEKATALVERSAKAIANLIADLVISLDIQKIAIGGSVGLAEGYLSLVEKYLQDFPSIYCCEIETAKFGQDAGLIGAAYWVKDVLLDKPEGTIYG.

Residues 5-12 (ALDIGGTK) and 132-139 (GVGGGIVL) each bind ATP. Residues histidine 156, cysteine 166, cysteine 168, and cysteine 173 each contribute to the Zn(2+) site.

This sequence belongs to the ROK (NagC/XylR) family. NanK subfamily. Homodimer.

The catalysed reaction is an N-acyl-D-mannosamine + ATP = an N-acyl-D-mannosamine 6-phosphate + ADP + H(+). It participates in amino-sugar metabolism; N-acetylneuraminate degradation; D-fructose 6-phosphate from N-acetylneuraminate: step 2/5. Functionally, catalyzes the phosphorylation of N-acetylmannosamine (ManNAc) to ManNAc-6-P. The polypeptide is N-acetylmannosamine kinase (Haemophilus influenzae (strain 86-028NP)).